The following is a 448-amino-acid chain: Phosphoglucosamine mutase (448 aa).

Catalysis depends on serine 100, which acts as the Phosphoserine intermediate. Mg(2+)-binding residues include serine 100, aspartate 240, aspartate 242, and aspartate 244. Serine 100 bears the Phosphoserine mark.

The protein belongs to the phosphohexose mutase family. It depends on Mg(2+) as a cofactor. Post-translationally, activated by phosphorylation.

The enzyme catalyses alpha-D-glucosamine 1-phosphate = D-glucosamine 6-phosphate. Its function is as follows. Catalyzes the conversion of glucosamine-6-phosphate to glucosamine-1-phosphate. The polypeptide is Phosphoglucosamine mutase (Geobacillus thermodenitrificans (strain NG80-2)).